Reading from the N-terminus, the 574-residue chain is MFSDYASRFLAQSRFSSVDQRNFKYPTSRSNLQSVSIDRNSSIDSHETDLSAGSSSLHGLNSLIDSGSIHWQLREQEQSNSHISRNENELFSKENSIYNGNFSENLGVQPNPQTISHESVNEEYTELPYDAHLPSEQKVPDRKWGLTFGFLTLALFTYSFLMVWRTNPNIPPATSPYAAIQKAFPLFHKDAIICMMLSVIWLFCLVAIPRFLYFLLASVPLTMFAFAVYLLKASRIHLETSIQPKLMLLTGIILLVAPILLSYYVWRRRIHFETSFNIIRLACRVIADIPQITLIFISFLFSFYVLIFIWVRLFARLFLRGSTLVGSVWVLPRSSWVLASFYSLHFLWLCTFFHALQCAIISSIVSQWFFYRDTKSSATKTNLVSHFFYHVVSNQYGLCAFSSFLVVITKVPLHFLPTWLRHVSRIVYYMFSKTSASYVTSPLTLAYASIYSVPYMNASKALYQIEQLNRVGLRRRSYYFSKYTLLAARSLLAIGVGVTSWNYSIHENGVFYGYIVGLLGGFLAWLIIGAIEGGLSMIVDALLICSIIDISSCQGDPNGSHCFEAWQLFESNGY.

Residues Asn40 and Asn101 are each glycosylated (N-linked (GlcNAc...) asparagine). 8 consecutive transmembrane segments (helical) span residues Trp144–Trp164, Lys189–Pro209, Phe211–Leu231, Leu246–Trp266, Gln291–Val311, Trp336–Leu356, Tyr396–Leu416, and Thr434–Met456. N-linked (GlcNAc...) asparagine glycosylation is present at Asn457. 2 helical membrane-spanning segments follow: residues Leu485–Ile505 and Phe511–Ile531. Asn558 carries N-linked (GlcNAc...) asparagine glycosylation.

Belongs to the CTL (choline transporter-like) family. As to quaternary structure, interacts with atg9.

The protein resides in the endoplasmic reticulum membrane. It localises to the preautophagosomal structure membrane. Functionally, required for the normal organization of the preautophagosomal structure (PAS) and for the correct subcellular location of atg9. The sequence is that of Choline transporter-like protein ctl1 (ctl1) from Schizosaccharomyces pombe (strain 972 / ATCC 24843) (Fission yeast).